A 383-amino-acid polypeptide reads, in one-letter code: Succinyl-diaminopimelate desuccinylase (383 aa).

His72 lines the Zn(2+) pocket. Asp74 is a catalytic residue. Asp105 contacts Zn(2+). The active-site Proton acceptor is the Glu137. 3 residues coordinate Zn(2+): Glu138, Glu167, and His352.

This sequence belongs to the peptidase M20A family. DapE subfamily. As to quaternary structure, homodimer. Requires Zn(2+) as cofactor. Co(2+) is required as a cofactor.

It catalyses the reaction N-succinyl-(2S,6S)-2,6-diaminopimelate + H2O = (2S,6S)-2,6-diaminopimelate + succinate. It functions in the pathway amino-acid biosynthesis; L-lysine biosynthesis via DAP pathway; LL-2,6-diaminopimelate from (S)-tetrahydrodipicolinate (succinylase route): step 3/3. In terms of biological role, catalyzes the hydrolysis of N-succinyl-L,L-diaminopimelic acid (SDAP), forming succinate and LL-2,6-diaminopimelate (DAP), an intermediate involved in the bacterial biosynthesis of lysine and meso-diaminopimelic acid, an essential component of bacterial cell walls. This Ehrlichia ruminantium (strain Gardel) protein is Succinyl-diaminopimelate desuccinylase.